We begin with the raw amino-acid sequence, 316 residues long: Ribosomal RNA small subunit methyltransferase H (316 aa).

Residues 35-37 (GGH), D55, Y79, D100, and Q107 contribute to the S-adenosyl-L-methionine site.

Belongs to the methyltransferase superfamily. RsmH family.

Its subcellular location is the cytoplasm. It catalyses the reaction cytidine(1402) in 16S rRNA + S-adenosyl-L-methionine = N(4)-methylcytidine(1402) in 16S rRNA + S-adenosyl-L-homocysteine + H(+). Its function is as follows. Specifically methylates the N4 position of cytidine in position 1402 (C1402) of 16S rRNA. In Nitrosospira multiformis (strain ATCC 25196 / NCIMB 11849 / C 71), this protein is Ribosomal RNA small subunit methyltransferase H.